A 244-amino-acid polypeptide reads, in one-letter code: Ubiquinone biosynthesis O-methyltransferase (244 aa).

S-adenosyl-L-methionine is bound by residues Arg-36, Gly-60, Asp-81, and Leu-123.

This sequence belongs to the methyltransferase superfamily. UbiG/COQ3 family.

It catalyses the reaction a 3-demethylubiquinol + S-adenosyl-L-methionine = a ubiquinol + S-adenosyl-L-homocysteine + H(+). The enzyme catalyses a 3-(all-trans-polyprenyl)benzene-1,2-diol + S-adenosyl-L-methionine = a 2-methoxy-6-(all-trans-polyprenyl)phenol + S-adenosyl-L-homocysteine + H(+). Its pathway is cofactor biosynthesis; ubiquinone biosynthesis. O-methyltransferase that catalyzes the 2 O-methylation steps in the ubiquinone biosynthetic pathway. This chain is Ubiquinone biosynthesis O-methyltransferase, found in Rickettsia felis (strain ATCC VR-1525 / URRWXCal2) (Rickettsia azadi).